The following is a 219-amino-acid chain: Protein-L-isoaspartate O-methyltransferase (219 aa).

Ser-65 is an active-site residue.

The protein belongs to the methyltransferase superfamily. L-isoaspartyl/D-aspartyl protein methyltransferase family. In terms of assembly, monomer.

The protein resides in the cytoplasm. The catalysed reaction is [protein]-L-isoaspartate + S-adenosyl-L-methionine = [protein]-L-isoaspartate alpha-methyl ester + S-adenosyl-L-homocysteine. In terms of biological role, catalyzes the methyl esterification of L-isoaspartyl residues in peptides and proteins that result from spontaneous decomposition of normal L-aspartyl and L-asparaginyl residues. It plays a role in the repair and/or degradation of damaged proteins. The chain is Protein-L-isoaspartate O-methyltransferase (pcm) from Pyrococcus furiosus (strain ATCC 43587 / DSM 3638 / JCM 8422 / Vc1).